We begin with the raw amino-acid sequence, 422 residues long: S100P-binding protein (422 aa).

3 disordered regions span residues 1–28, 61–135, and 170–292; these read MMCSLVPSEQSSGTSLLPKDNAPFSWSS, LKDD…TPAK, and YVSE…DSGK. The span at 80 to 90 shows a compositional bias: basic and acidic residues; that stretch reads DDSRNVEKGEK. S195 is subject to Phosphoserine. Residues 231 to 241 show a composition bias toward basic and acidic residues; sequence VSDKNMSDSKK. The span at 255-269 shows a compositional bias: polar residues; sequence TPNTGSSRRNGSYKS. Over residues 274–283 the composition is skewed to low complexity; the sequence is KLPVSSSSSK.

As to quaternary structure, interacts with S100P.

It is found in the nucleus. In Bos taurus (Bovine), this protein is S100P-binding protein.